The sequence spans 366 residues: Nucleoporin SEH1 (366 aa).

WD repeat units follow at residues 18 to 57 (AHRD…NWRR), 63 to 104 (CHGG…TEKD), 111 to 152 (QWIR…RIYE), 161 to 209 (RWNL…VIYE), 226 to 267 (DMPC…TAIL), and 290 to 329 (GDQR…QWVK).

Belongs to the WD repeat SEC13 family. Component of the nuclear pore complex (NPC). Probably part of the GATOR complex.

Its subcellular location is the nucleus. The protein localises to the nuclear pore complex. The protein resides in the lysosome membrane. Probable component of the nuclear pore complex (NPC) which is involved in the trafficking of macromolecules between the cytoplasm and nucleus. Functionally, as a component of the GATOR complex may function in the amino acid-sensing branch of the TORC1 signaling pathway. This Caenorhabditis briggsae protein is Nucleoporin SEH1.